The sequence spans 915 residues: DNA (cytosine-5)-methyltransferase 2 (915 aa).

Positions 1-14 are enriched in low complexity; that stretch reads MAPSSPSSARPTRA. The segment at 1 to 171 is disordered; that stretch reads MAPSSPSSAR…STAANKPEED (171 aa). Positions 15–30 are enriched in basic and acidic residues; the sequence is SGRERSAMAEEIHQNQ. A compositionally biased stretch (basic residues) spans 42–57; it reads AKRRRKAASSGKKPKP. Residues 71-80 are compositionally biased toward basic and acidic residues; the sequence is KKGETEKTEP. A compositionally biased stretch (acidic residues) spans 81 to 108; the sequence is VVDDVCAEEPDEEELAMGEEEAEAEEQA. Residues 109–119 are compositionally biased toward low complexity; that stretch reads MQEVVAAVAAG. In terms of domain architecture, BAH spans 188–313; it reads IVYCLGDDVY…VAYSTFANIS (126 aa). Polar residues predominate over residues 315 to 328; it reads ENGQSGSETASGIS. The disordered stretch occupies residues 315-338; it reads ENGQSGSETASGISSDDAGLETSS. Positions 345 to 876 constitute an SAM-dependent MTase C5-type domain; sequence ATLLDLYSGC…YCLGQAYLGE (532 aa). One can recognise a Chromo domain in the interval 445-508; it reads FVVQKLIGIR…EGRKRKILPL (64 aa). Residue C521 is part of the active site.

Belongs to the class I-like SAM-binding methyltransferase superfamily. C5-methyltransferase family.

The protein resides in the nucleus. The enzyme catalyses a 2'-deoxycytidine in DNA + S-adenosyl-L-methionine = a 5-methyl-2'-deoxycytidine in DNA + S-adenosyl-L-homocysteine + H(+). In terms of biological role, may be involved in the CpXpG methylation and in gene silencing. This is DNA (cytosine-5)-methyltransferase 2 (ZMET5) from Zea mays (Maize).